Consider the following 1303-residue polypeptide: Alpha,alpha-trehalose-phosphate synthase [UDP-forming] 2 (1303 aa).

Disordered stretches follow at residues 1–48 (MTVV…NNTT) and 205–251 (LQRR…FRGK). Residues 212–221 (SSRGGSLRGS) are compositionally biased toward low complexity.

It in the N-terminal section; belongs to the glycosyltransferase 20 family. In the C-terminal section; belongs to the gob-1 trehalose phosphatase family.

The enzyme catalyses D-glucose 6-phosphate + UDP-alpha-D-glucose = alpha,alpha-trehalose 6-phosphate + UDP + H(+). Catalyzes the production of trehalose from glucose-6-phosphate and UDP-alpha-D-glucose in a 2 step process. In Aphelenchoides avenae (Mycophagous nematode worm), this protein is Alpha,alpha-trehalose-phosphate synthase [UDP-forming] 2 (tps-2).